The primary structure comprises 148 residues: uncharacterized protein (148 aa).

C21, C24, C88, and C117 together coordinate [4Fe-4S] cluster.

This sequence belongs to the complex I 20 kDa subunit family. [4Fe-4S] cluster serves as cofactor.

This is an uncharacterized protein from Methanocaldococcus jannaschii (strain ATCC 43067 / DSM 2661 / JAL-1 / JCM 10045 / NBRC 100440) (Methanococcus jannaschii).